An 849-amino-acid chain; its full sequence is MADSDDEYDRRRRDKFRRERSDYDRSREREERRRDDWSDREWDRGRERRSRGEYRDYESRSRRERFSPQRHDLSPPQKRMRRDWDDHGSDPYHSGYDLPYSSSAGGPGYGPPQPWGHPEMHVLQHHGIPIQARLGNLHQVDLGTPAPIMKTFKEFLLSLEDTVDETEAVKRYNDYKIDFRRQQMQEFFLAHKDEEWFRSKYHPDEVGKHKQESQASLRNRLSAFMFLMEKSWLNEVQLDIAQSPAIIKVLDAAVIKMEGGTEIDLKILDEEEEEAKREAAKKEEAPVTETEKVVTEEKEAPAKPENDKEDESEEKPVKPQEEEEKKVEKKVEKEEPERETRKPGTRKRKRSGESDDGSDSESDTETASPKPKAETPNQNGRAEETPKKEEDTEKQKEKQKEDTVKPRPLHKTCSIFMRNIPPNISKAEITALCKRYPGFMRVALSEPQPERRFLRKAYVTFDRSVNIKEICWSVQNIRLRECELSPGVNRDLTYRVRNINGITLHRPIVRNDIKLAARLIHALDERAVLWEGEQMVLAQNPILKNITDYLIDEVNAEEEELLFSAGRTPETELPKDGNPTEISVERDDKLIKVLDKLLFYLRIVHSVDYYNTCEYPNEDEMPTRCGMMHVRGPLPPNRVSHGEVAEWQKTFEEKLAPLFAVRETLSEEESIKMGKKDPEQEVEKFVAANTQELGKEKWLCPLSGKKFKGPEFVRKHIFNKHAEKIEEVKKEVVFFNNYLIDSKRPALLEVKPLQPPVGAAGQALAAGLLYPHQGPPALLPYAQPRPPVLGYGGAPQFPPNPYGAGRGNYDAFRGQGMYPGKPRNRMMRGDPRSIIEYRDLDAPDDVDFF.

Disordered stretches follow at residues 1–90 (MADS…HGSD) and 276–409 (KREA…PRPL). Basic and acidic residues-rich tracts occupy residues 8 to 73 (YDRR…RHDL), 276 to 306 (KREA…KPEN), and 314 to 342 (EKPV…ETRK). A compositionally biased stretch (acidic residues) spans 354-364 (SDDGSDSESDT). Basic and acidic residues predominate over residues 381-405 (RAEETPKKEEDTEKQKEKQKEDTVK).

The protein belongs to the ARS2 family. As to quaternary structure, interacts ncbp1/cbp80.

It is found in the nucleus. The protein resides in the nucleoplasm. Its subcellular location is the cytoplasm. Functionally, acts as a mediator between the cap-binding complex (CBC) and the primary microRNAs (miRNAs) processing machinery during cell proliferation. Contributes to the stability and delivery of capped primary miRNA transcripts to the primary miRNA processing complex, thereby playing a role in RNA-mediated gene silencing (RNAi) by miRNAs. The protein is Serrate RNA effector molecule homolog A (srrt-a) of Xenopus laevis (African clawed frog).